The sequence spans 488 residues: Tyrosine-protein kinase Srms (488 aa).

An SH3 domain is found at 51-112; the sequence is PFPQLFLALY…PITHVAKASP (62 aa). The SH2 domain maps to 120–212; that stretch reads WYFSGVSRTQ…LIQNPLLQPC (93 aa). Residues 230-488 enclose the Protein kinase domain; it reads FALGRKLGEG…KLHAIHRCHP (259 aa). Residues 236–244 and Lys-258 each bind ATP; that span reads LGEGYFGEV. The active-site Proton acceptor is Asp-350. A Phosphotyrosine; by autocatalysis modification is found at Tyr-380.

This sequence belongs to the protein kinase superfamily. Tyr protein kinase family. SRC subfamily. Interacts (via the SH2 and SH3 domains) with DOK1. Interacts with KHDRBS1/SAM68 and VIM. As to expression, highly expressed in most breast cancers (at protein level).

It is found in the cytoplasm. It catalyses the reaction L-tyrosyl-[protein] + ATP = O-phospho-L-tyrosyl-[protein] + ADP + H(+). Functionally, non-receptor tyrosine-protein kinase which phosphorylates DOK1 on tyrosine residues. Also phosphorylates KHDRBS1/SAM68 and VIM on tyrosine residues. Phosphorylation of KHDRBS1 is EGF-dependent. Phosphorylates OTUB1, promoting deubiquitination of RPTOR. The polypeptide is Tyrosine-protein kinase Srms (SRMS) (Homo sapiens (Human)).